Here is a 239-residue protein sequence, read N- to C-terminus: Adapter protein MecA (239 aa).

Residues 118–128 (EQRTKEKEAQG) are compositionally biased toward basic and acidic residues. Positions 118 to 137 (EQRTKEKEAQGSKRQKSSAR) are disordered.

Belongs to the MecA family. In terms of assembly, homodimer.

Its function is as follows. Enables the recognition and targeting of unfolded and aggregated proteins to the ClpC protease or to other proteins involved in proteolysis. The polypeptide is Adapter protein MecA (Staphylococcus aureus (strain COL)).